The chain runs to 138 residues: MTTDTQSLPAWLDKVRWDDNGLVPVIAQEAATNDVLMFAWMNREALAKTIETQRAVYYSRSRKRLWFKGEESGHVQHVHEVRLDCDEDVVLLKVEQVSGIACHTGRHSCFFQKFEGTVENGDWVAVEPVLKDPEHIYK.

Position 84 (D84) interacts with Mg(2+). C85 is a Zn(2+) binding site. Residues D86 and D88 each coordinate Mg(2+). Zn(2+)-binding residues include C102 and C109.

It belongs to the PRA-CH family. In terms of assembly, homodimer. The cofactor is Mg(2+). Zn(2+) serves as cofactor.

The protein localises to the cytoplasm. It catalyses the reaction 1-(5-phospho-beta-D-ribosyl)-5'-AMP + H2O = 1-(5-phospho-beta-D-ribosyl)-5-[(5-phospho-beta-D-ribosylamino)methylideneamino]imidazole-4-carboxamide. It participates in amino-acid biosynthesis; L-histidine biosynthesis; L-histidine from 5-phospho-alpha-D-ribose 1-diphosphate: step 3/9. In terms of biological role, catalyzes the hydrolysis of the adenine ring of phosphoribosyl-AMP. The sequence is that of Phosphoribosyl-AMP cyclohydrolase from Burkholderia vietnamiensis (strain G4 / LMG 22486) (Burkholderia cepacia (strain R1808)).